A 359-amino-acid polypeptide reads, in one-letter code: Ribosomal RNA large subunit methyltransferase M (359 aa).

S-adenosyl-L-methionine-binding positions include Ser-186, 219-222 (CPGG), Asp-238, Asp-258, and Asp-275. Catalysis depends on Lys-304, which acts as the Proton acceptor.

Belongs to the class I-like SAM-binding methyltransferase superfamily. RNA methyltransferase RlmE family. RlmM subfamily. In terms of assembly, monomer.

It localises to the cytoplasm. It catalyses the reaction cytidine(2498) in 23S rRNA + S-adenosyl-L-methionine = 2'-O-methylcytidine(2498) in 23S rRNA + S-adenosyl-L-homocysteine + H(+). Catalyzes the 2'-O-methylation at nucleotide C2498 in 23S rRNA. In Vibrio vulnificus (strain YJ016), this protein is Ribosomal RNA large subunit methyltransferase M.